The primary structure comprises 133 residues: MITEDEVNKLLSENEALFRFMGAKFEKIERGVAKLSFEYKEELSRIGGMLHGAIIFAAMDYSGSYAVRTLDVKEAYTLEFNVIFLKAMKTPPFTFLARVVRETKRYAYVEVEGFDGNNELCAKGNGIWHLIRD.

It belongs to the thioesterase PaaI family.

This chain is Putative esterase STK_17900, found in Sulfurisphaera tokodaii (strain DSM 16993 / JCM 10545 / NBRC 100140 / 7) (Sulfolobus tokodaii).